The chain runs to 801 residues: MLVSYKWLKELVDIDVPSQELAEKMSTTGIEVEGVESPAAGLSKIVVGEVLSCEDVPETHLHVCQINVGEEEERQIVCGAPNVRAGIKVMVALPGARIADNYKIKKGKIRGLESLGMICSLGELGISDSVVPKEFADGIQILPEDAVPGEEVFSYLDLDDEIIELSITPNRADALSMCGVAHEVAAIYDKAVNFKKFTLTETNEAAADALSVSIETDKAPYYAARILDNVTIAPSPQWLQNLLMNEGIRPINNVVDVTNYILLYFGQPMHAFDLDTFEGTDIRVREARDGEKLVTLDGEERDLAETDLVITVADKPVALAGVMGGQATEISEKSSRVILEAAVFNGKSIRKTSGRLNLRSESSSRFEKGINVATVNEALDAAASMIAELAGATVRKGIVSAGELDTSDVEVSSTLADVNRVLGTELSYADVEDVFRRLGFGLSGNADSFTVSVPRRRWDITIEADLFEEIARIYGYDRLPTSLPKDDGTAGELTVIQKLRRQVRTIAEGAGLTEIITYALTTPEKAVEFTAQPSNLTELMWPMTVDRSVLRQNMISGILDTVAYNVARKNKNLALYEIGKVFEQTGNPKEELPNEINSFAFALTGLVAEKDFQTAAVPVDFFYAKGILEALFTRLGLQVTYTATSEIVSLHPGRTAVISLGDQVLGFLGQVHPVTAKAYDIPETYVAELNLSAIEGALQPAVPFVEITKFPAVSRDVALLLKAEVTHQEVVDAIQAAGVKRLTDIKLFDVFSGEKLGLGMKSMAYSLTFQNPEDSLTDEEVARYMEKIQASLEEKVNAEVR.

In terms of domain architecture, tRNA-binding spans 39-153 (AAGLSKIVVG…EDAVPGEEVF (115 aa)). One can recognise a B5 domain in the interval 406 to 481 (TSDVEVSSTL…RIYGYDRLPT (76 aa)). Mg(2+) is bound by residues Asp-459, Asp-465, Glu-468, and Glu-469. In terms of domain architecture, FDX-ACB spans 708–801 (TKFPAVSRDV…LEEKVNAEVR (94 aa)).

It belongs to the phenylalanyl-tRNA synthetase beta subunit family. Type 1 subfamily. As to quaternary structure, tetramer of two alpha and two beta subunits. Mg(2+) is required as a cofactor.

Its subcellular location is the cytoplasm. It catalyses the reaction tRNA(Phe) + L-phenylalanine + ATP = L-phenylalanyl-tRNA(Phe) + AMP + diphosphate + H(+). The sequence is that of Phenylalanine--tRNA ligase beta subunit from Streptococcus pneumoniae serotype 4 (strain ATCC BAA-334 / TIGR4).